Here is a 491-residue protein sequence, read N- to C-terminus: Diacylglycerol O-acyltransferase 1 (491 aa).

Residues 1-60 form a disordered region; that stretch reads MGDRGGAGGTRRRRTGSRPSSHGGGGPAAAEEEVRDAAAGPDMGAAGDAPAPAPSKDADD. Topologically, residues 1–86 are cytoplasmic; that stretch reads MGDRGGAGGT…SLFSSDSGFN (86 aa). Residues 1–94 are involved in homomerization; sequence MGDRGGAGGT…FNNYRGILNW (94 aa). Phosphoserine occurs at positions 20 and 21. Residues 37 to 50 show a composition bias toward low complexity; the sequence is AAAGPDMGAAGDAP. Residues 87-121 traverse the membrane as a helical segment; sequence NYRGILNWCVVMLILSNARLFLENLIKYGILVDPI. At 122 to 133 the chain is on the lumenal side; sequence QVVSLFLKDPYS. The interval 122–133 is extracellular loop 1 (EL1); sequence QVVSLFLKDPYS. Residues 134–159 form a helical membrane-spanning segment; the sequence is WPAPCLVIAANVFAVAAFQVEKRLAV. The MBOAT fold stretch occupies residues 134-491; sequence WPAPCLVIAA…LNYEAPVAGA (358 aa). At 160–164 the chain is on the cytoplasmic side; that stretch reads GALTE. A helical transmembrane segment spans residues 165–187; it reads QAGLLLHVANLATILCFPAAVVL. Over 188–194 the chain is Lumenal; sequence LVESITP. A helical membrane pass occupies residues 195-226; sequence VGSLLALMVHTILFLKLFSYRDVNLWCRRARA. Residues 227–276 lie on the Cytoplasmic side of the membrane; that stretch reads KAASAGKRASSAAAPHTVSYPDNLTYRDLYYFLFAPTLCYELNFPRSPRI. The tract at residues 227-279 is intracellular loop 1 (IL1); sequence KAASAGKRASSAAAPHTVSYPDNLTYRDLYYFLFAPTLCYELNFPRSPRIRKR. A helical membrane pass occupies residues 277–311; the sequence is RKRFLLRRILEMLFFTQLQVGLIQQWMVPTIQNSM. Residues 312 to 318 are Lumenal-facing; it reads KPFKDMD. A helical membrane pass occupies residues 319–356; it reads YSRIIERLLKLAVPNHLIWLIFFYWLFHSCLNAVAELM. At 357–402 the chain is on the cytoplasmic side; it reads QFGDREFYRDWWNSESVTYFWQNWNIPVHKWCIRHFYKPMLRRGSS. Residues 357 to 402 are intracellular loop 2 (IL2); the sequence is QFGDREFYRDWWNSESVTYFWQNWNIPVHKWCIRHFYKPMLRRGSS. The FYXDWWN motif motif lies at 363 to 369; sequence FYRDWWN. Residues 377–385, tyrosine 393, and arginine 407 each bind an acyl-CoA; that span reads WQNWNIPVH. The amphipathic helix (AH) stretch occupies residues 383–397; the sequence is PVHKWCIRHFYKPML. The chain crosses the membrane as a helical span at residues 403–423; sequence RWMARIGVFLASAFFHEYLVS. Histidine 418 is an active-site residue. Topologically, residues 424-431 are lumenal; it reads VPLRMFRL. Residues 432–450 traverse the membrane as a helical segment; that stretch reads WAFTGMMAQIPLAWFVGRF. Over 451-452 the chain is Cytoplasmic; it reads FQ. A helical membrane pass occupies residues 453–484; the sequence is GNYGNAAVWLTLIIGQPIAVLMYVHDYYVLNY. Residue tyrosine 480 coordinates an acyl-CoA. The Lumenal segment spans residues 485–491; it reads EAPVAGA.

The protein belongs to the membrane-bound acyltransferase family. Sterol o-acyltransferase subfamily. As to quaternary structure, homodimer or homotetramer; both forms have similar enzymatic activities.

It is found in the endoplasmic reticulum membrane. The enzyme catalyses an acyl-CoA + a 1,2-diacyl-sn-glycerol = a triacyl-sn-glycerol + CoA. The catalysed reaction is all-trans-retinol + an acyl-CoA = an all-trans-retinyl ester + CoA. It catalyses the reaction 2-(9Z-octadecenoyl)-glycerol + (9Z)-octadecenoyl-CoA = 1,2-di-(9Z-octadecenoyl)-sn-glycerol + CoA. It carries out the reaction 1,2-di-(9Z-octadecenoyl)-sn-glycerol + (9Z)-octadecenoyl-CoA = 1,2,3-tri-(9Z-octadecenoyl)-glycerol + CoA. The enzyme catalyses all-trans-retinol + hexadecanoyl-CoA = all-trans-retinyl hexadecanoate + CoA. The catalysed reaction is 1-O-(9Z-octadecenyl)-glycerol + (9Z)-octadecenoyl-CoA = 1-O-(9Z-octadecyl)-3-(9Z-octadecenoyl)-glycerol + CoA. It catalyses the reaction 1-O-(9Z-octadecyl)-3-(9Z-octadecenoyl)-glycerol + (9Z)-octadecenoyl-CoA = 1-O-(9Z-octadecenyl)-2,3-di-(9Z-octadecenoyl)glycerol + CoA. It carries out the reaction 1-(9Z-octadecenoyl)-glycerol + (9Z)-octadecenoyl-CoA = 1,2-di-(9Z-octadecenoyl)-glycerol + CoA. The enzyme catalyses 1,2-di-(9Z-octadecenoyl)-glycerol + (9Z)-octadecenoate + H(+) = 1,2,3-tri-(9Z-octadecenoyl)-glycerol + H2O. The catalysed reaction is 1-octadecanoyl-2-(5Z,8Z,11Z,14Z-eicosatetraenoyl)-sn-glycerol + (9Z)-octadecenoyl-CoA = 1-octadecanoyl-2-(5Z,8Z,11Z,14Z)-eicosatetraenoyl-3-(9Z)-octadecenoyl-sn-glycerol + CoA. It catalyses the reaction hexadecane-1,2-diol + 2 hexadecanoyl-CoA = 1,2-O,O-dihexadecanoyl-1,2-hexadecanediol + 2 CoA. It carries out the reaction hexadecane-1,2-diol + hexadecanoyl-CoA = 2-hydroxyhexadecyl hexadecanoate + CoA. The enzyme catalyses 2-(9Z-octadecenoyl)-glycerol + hexadecanoyl-CoA = 1-hexadecanoyl-2-(9Z-octadecenoyl)-sn-glycerol + CoA. The catalysed reaction is 1,2-di-(9Z-octadecenoyl)-sn-glycerol + hexadecanoyl-CoA = 1,2-di-(9Z)-octadecenoyl-3-hexadecanoyl-sn-glycerol + CoA. It catalyses the reaction hexadecan-1-ol + hexadecanoyl-CoA = hexadecanyl hexadecanoate + CoA. It carries out the reaction 13-cis-retinol + hexadecanoyl-CoA = 13-cis-retinyl hexadecanoate + CoA. The enzyme catalyses 1,3-di-(9Z-octadecenoyl)-glycerol + (9Z)-octadecenoyl-CoA = 1,2,3-tri-(9Z-octadecenoyl)-glycerol + CoA. The catalysed reaction is 2,3-di-(9Z)-octadecenoyl-sn-glycerol + (9Z)-octadecenoyl-CoA = 1,2,3-tri-(9Z-octadecenoyl)-glycerol + CoA. It participates in lipid metabolism; glycerolipid metabolism. Catalyzes the terminal and only committed step in triacylglycerol synthesis by using diacylglycerol and fatty acyl CoA as substrates. Highly expressed in epithelial cells of the small intestine and its activity is essential for the absorption of dietary fats. In liver, plays a role in esterifying exogenous fatty acids to glycerol, and is required to synthesize fat for storage. Also present in female mammary glands, where it produces fat in the milk. May be involved in VLDL (very low density lipoprotein) assembly. In contrast to DGAT2 it is not essential for survival. Functions as the major acyl-CoA retinol acyltransferase (ARAT) in the skin, where it acts to maintain retinoid homeostasis and prevent retinoid toxicity leading to skin and hair disorders. Exhibits additional acyltransferase activities, includin acyl CoA:monoacylglycerol acyltransferase (MGAT), wax monoester and wax diester synthases. Also able to use 1-monoalkylglycerol (1-MAkG) as an acyl acceptor for the synthesis of monoalkyl-monoacylglycerol (MAMAG). This is Diacylglycerol O-acyltransferase 1 (DGAT1) from Chlorocebus aethiops (Green monkey).